Reading from the N-terminus, the 202-residue chain is Superoxide dismutase [Fe] (202 aa).

Residues histidine 30, histidine 78, aspartate 164, and histidine 168 each contribute to the Fe cation site.

Belongs to the iron/manganese superoxide dismutase family. In terms of assembly, homotetramer. Fe cation is required as a cofactor.

The enzyme catalyses 2 superoxide + 2 H(+) = H2O2 + O2. Functionally, destroys superoxide anion radicals which are normally produced within the cells and which are toxic to biological systems. The polypeptide is Superoxide dismutase [Fe] (sod) (Methanothermobacter marburgensis (strain ATCC BAA-927 / DSM 2133 / JCM 14651 / NBRC 100331 / OCM 82 / Marburg) (Methanobacterium thermoautotrophicum)).